Here is a 299-residue protein sequence, read N- to C-terminus: Acetylglutamate kinase (299 aa).

Residues 64 to 65 (GG), Arg-86, and Asn-197 each bind substrate.

Belongs to the acetylglutamate kinase family. ArgB subfamily.

It is found in the cytoplasm. It carries out the reaction N-acetyl-L-glutamate + ATP = N-acetyl-L-glutamyl 5-phosphate + ADP. Its pathway is amino-acid biosynthesis; L-arginine biosynthesis; N(2)-acetyl-L-ornithine from L-glutamate: step 2/4. In terms of biological role, catalyzes the ATP-dependent phosphorylation of N-acetyl-L-glutamate. This Sulfurihydrogenibium sp. (strain YO3AOP1) protein is Acetylglutamate kinase.